The sequence spans 206 residues: Small ribosomal subunit protein uS4 (206 aa).

The region spanning Gly96–Ala157 is the S4 RNA-binding domain.

It belongs to the universal ribosomal protein uS4 family. In terms of assembly, part of the 30S ribosomal subunit. Contacts protein S5. The interaction surface between S4 and S5 is involved in control of translational fidelity.

One of the primary rRNA binding proteins, it binds directly to 16S rRNA where it nucleates assembly of the body of the 30S subunit. In terms of biological role, with S5 and S12 plays an important role in translational accuracy. In Sodalis glossinidius (strain morsitans), this protein is Small ribosomal subunit protein uS4.